The sequence spans 125 residues: Succinate dehydrogenase cytochrome b556 subunit (125 aa).

At 1-29 the chain is on the cytoplasmic side; the sequence is MTKTKQEIYNKRPTSPHLTIYKPQISSTL. A helical transmembrane segment spans residues 30–55; sequence SILHRMTGVALFFAVSILAWWFILSK. At 56–68 the chain is on the periplasmic side; sequence FDSNYIKLANCCC. Residues 69–89 form a helical membrane-spanning segment; the sequence is IIKICLILTSFAWFYHLCNGI. Residue histidine 84 participates in heme binding. Topologically, residues 90-104 are cytoplasmic; it reads RHLFWDIGLGFSIKA. A helical transmembrane segment spans residues 105–125; the sequence is VNLTGWSVVICSVLFTILLWV.

It belongs to the cytochrome b560 family. Part of an enzyme complex containing four subunits: a flavoprotein, an iron-sulfur protein, plus two membrane-anchoring proteins, SdhC and SdhD. The complex can form homotrimers. Requires heme as cofactor.

The protein resides in the cell inner membrane. It participates in carbohydrate metabolism; tricarboxylic acid cycle. In terms of biological role, membrane-anchoring subunit of succinate dehydrogenase (SDH). The polypeptide is Succinate dehydrogenase cytochrome b556 subunit (sdhC) (Rickettsia bellii (strain RML369-C)).